Here is a 117-residue protein sequence, read N- to C-terminus: Large ribosomal subunit protein bL19 (117 aa).

The protein belongs to the bacterial ribosomal protein bL19 family.

In terms of biological role, this protein is located at the 30S-50S ribosomal subunit interface and may play a role in the structure and function of the aminoacyl-tRNA binding site. This is Large ribosomal subunit protein bL19 from Vibrio vulnificus (strain CMCP6).